The primary structure comprises 91 residues: Large ribosomal subunit protein uL23 (91 aa).

This sequence belongs to the universal ribosomal protein uL23 family. Part of the 50S ribosomal subunit. Contacts protein L29, and trigger factor when it is bound to the ribosome.

One of the early assembly proteins it binds 23S rRNA. One of the proteins that surrounds the polypeptide exit tunnel on the outside of the ribosome. Forms the main docking site for trigger factor binding to the ribosome. The sequence is that of Large ribosomal subunit protein uL23 from Staphylococcus haemolyticus (strain JCSC1435).